The chain runs to 121 residues: Small ribosomal subunit protein uS13 (121 aa).

Positions Gly94–Lys121 are disordered. The segment covering Lys110–Lys121 has biased composition (basic residues).

It belongs to the universal ribosomal protein uS13 family. As to quaternary structure, part of the 30S ribosomal subunit. Forms a loose heterodimer with protein S19. Forms two bridges to the 50S subunit in the 70S ribosome.

Located at the top of the head of the 30S subunit, it contacts several helices of the 16S rRNA. In the 70S ribosome it contacts the 23S rRNA (bridge B1a) and protein L5 of the 50S subunit (bridge B1b), connecting the 2 subunits; these bridges are implicated in subunit movement. Contacts the tRNAs in the A and P-sites. The sequence is that of Small ribosomal subunit protein uS13 from Mesoplasma florum (strain ATCC 33453 / NBRC 100688 / NCTC 11704 / L1) (Acholeplasma florum).